A 437-amino-acid chain; its full sequence is O-methyltransferase 10 (437 aa).

Residues Gly-259, Glu-282, Asn-315, and Met-316 each contribute to the S-adenosyl-L-methionine site. Catalysis depends on His-335, which acts as the Proton acceptor.

The protein belongs to the class I-like SAM-binding methyltransferase superfamily. Cation-independent O-methyltransferase family. COMT subfamily.

The enzyme catalyses (3,5-dichloro-2,4,6-trihydroxyphenyl)hexan-1-one + S-adenosyl-L-methionine = 1-(3,5-dichloro-2,6-dihydroxy-4-methoxyphenyl)hexan-1-one + S-adenosyl-L-homocysteine + H(+). This chain is O-methyltransferase 10 (omt10), found in Dictyostelium discoideum (Social amoeba).